The following is a 206-amino-acid chain: MEFSSKLLEKAVNEMAQLPGIGKRTALRLVLYLLKQPKDRTDFLAQSLLTMREGIIFCENCHNISDVAVCEICSNKNRNHQIVCVVEDVRDVMAIENTGQFRGVYHVLGGKISPIDGVGPSQLNISSLVEKVKSGSVSEIIFALSSTMEGDTTNFYIYKQIKDCEIITSSIARGISVGDELEYADEVTLGRSILNRIPFENSFKNN.

Residues 58-73 form a C4-type zinc finger; the sequence is CENCHNISDVAVCEIC. Residues 81 to 176 form the Toprim domain; that stretch reads QIVCVVEDVR…ITSSIARGIS (96 aa).

The protein belongs to the RecR family.

Its function is as follows. May play a role in DNA repair. It seems to be involved in an RecBC-independent recombinational process of DNA repair. It may act with RecF and RecO. The protein is Recombination protein RecR of Flavobacterium psychrophilum (strain ATCC 49511 / DSM 21280 / CIP 103535 / JIP02/86).